The primary structure comprises 523 residues: 2-isopropylmalate synthase (523 aa).

In terms of domain architecture, Pyruvate carboxyltransferase spans 5-267; it reads VIIFDTTLRD…HTNINHHEIW (263 aa). Positions 14, 202, 204, and 238 each coordinate Mn(2+). The interval 392 to 523 is regulatory domain; sequence RLDYFSVQSG…QNKENNKETV (132 aa).

It belongs to the alpha-IPM synthase/homocitrate synthase family. LeuA type 1 subfamily. In terms of assembly, homodimer. Mn(2+) serves as cofactor.

The protein resides in the cytoplasm. It carries out the reaction 3-methyl-2-oxobutanoate + acetyl-CoA + H2O = (2S)-2-isopropylmalate + CoA + H(+). It functions in the pathway amino-acid biosynthesis; L-leucine biosynthesis; L-leucine from 3-methyl-2-oxobutanoate: step 1/4. Functionally, catalyzes the condensation of the acetyl group of acetyl-CoA with 3-methyl-2-oxobutanoate (2-ketoisovalerate) to form 3-carboxy-3-hydroxy-4-methylpentanoate (2-isopropylmalate). This chain is 2-isopropylmalate synthase, found in Salmonella choleraesuis (strain SC-B67).